The sequence spans 320 residues: cUMP-AMP-activated phospholipase (320 aa).

Residues 23-204 (LALDGGGAKG…CANNPTLFAI (182 aa)) enclose the PNPLA domain. A GXGXXG motif is present at residues 27–32 (GGGAKG). Residues 59 to 63 (GTSTG) carry the GXSXG motif. Catalysis depends on Ser-61, which acts as the Nucleophile. Asp-191 functions as the Proton acceptor in the catalytic mechanism. The DGA/G motif lies at 191–193 (DGG).

Belongs to the patatin family.

It catalyses the reaction a 1,2-diacyl-sn-glycero-3-phosphocholine + H2O = a 2-acyl-sn-glycero-3-phosphocholine + a fatty acid + H(+). Phospholipase activity is specifically activated upon 3',3'-cUAMP binding. Is not activated by the other cyclic dinucleotides 3',3'-cGAMP, 3',3'-c-diAMP and 3',3'-c-diGMP. Therefore, is specifically activated by only the nucleotide synthesized from its adjacently encoded nucleotidyltransferase (CdnE). Functionally, effector phospholipase of a CBASS antivirus system. CBASS (cyclic oligonucleotide-based antiphage signaling system) provides immunity against bacteriophage. The CD-NTase protein synthesizes cyclic nucleotides in response to infection; these serve as specific second messenger signals. The signals activate a diverse range of effectors, leading to bacterial cell death and thus abortive phage infection. A type II-A(UA) CBASS system. Phospholipase that is activated upon binding to the cyclic dinucleotide (CDN) second messenger 3',3'-cyclic UMP-AMP (3',3'-cUAMP). This chain is cUMP-AMP-activated phospholipase, found in Escherichia coli.